The chain runs to 210 residues: Large ribosomal subunit protein uL3 (210 aa).

The segment at 133-152 (ATHGNSLSHRVHGSTGQNQT) is disordered. Position 151 is an N5-methylglutamine (Gln151).

Belongs to the universal ribosomal protein uL3 family. In terms of assembly, part of the 50S ribosomal subunit. Forms a cluster with proteins L14 and L19. In terms of processing, methylated by PrmB.

Its function is as follows. One of the primary rRNA binding proteins, it binds directly near the 3'-end of the 23S rRNA, where it nucleates assembly of the 50S subunit. This is Large ribosomal subunit protein uL3 from Francisella tularensis subsp. holarctica (strain FTNF002-00 / FTA).